The primary structure comprises 644 residues: Biosynthetic arginine decarboxylase (644 aa).

Lysine 100 bears the N6-(pyridoxal phosphate)lysine mark. Residue 282–292 (CDVGGGLAIDY) coordinates substrate.

It belongs to the Orn/Lys/Arg decarboxylase class-II family. SpeA subfamily. The cofactor is Mg(2+). Pyridoxal 5'-phosphate serves as cofactor.

It carries out the reaction L-arginine + H(+) = agmatine + CO2. Catalyzes the biosynthesis of agmatine from arginine. This Gloeobacter violaceus (strain ATCC 29082 / PCC 7421) protein is Biosynthetic arginine decarboxylase.